The following is a 183-amino-acid chain: Large ribosomal subunit protein uL5 (183 aa).

It belongs to the universal ribosomal protein uL5 family. As to quaternary structure, part of the 50S ribosomal subunit; part of the 5S rRNA/L5/L18/L25 subcomplex. Contacts the 5S rRNA and the P site tRNA. Forms a bridge to the 30S subunit in the 70S ribosome.

Its function is as follows. This is one of the proteins that bind and probably mediate the attachment of the 5S RNA into the large ribosomal subunit, where it forms part of the central protuberance. In the 70S ribosome it contacts protein S13 of the 30S subunit (bridge B1b), connecting the 2 subunits; this bridge is implicated in subunit movement. Contacts the P site tRNA; the 5S rRNA and some of its associated proteins might help stabilize positioning of ribosome-bound tRNAs. The polypeptide is Large ribosomal subunit protein uL5 (Kosmotoga olearia (strain ATCC BAA-1733 / DSM 21960 / TBF 19.5.1)).